A 158-amino-acid chain; its full sequence is Transcription elongation factor GreA (158 aa).

Residues 53–73 (EQQGMVEARIRDIEAKLSNAQ) are a coiled coil.

Belongs to the GreA/GreB family.

Its function is as follows. Necessary for efficient RNA polymerase transcription elongation past template-encoded arresting sites. The arresting sites in DNA have the property of trapping a certain fraction of elongating RNA polymerases that pass through, resulting in locked ternary complexes. Cleavage of the nascent transcript by cleavage factors such as GreA or GreB allows the resumption of elongation from the new 3'terminus. GreA releases sequences of 2 to 3 nucleotides. This chain is Transcription elongation factor GreA, found in Pseudomonas aeruginosa (strain ATCC 15692 / DSM 22644 / CIP 104116 / JCM 14847 / LMG 12228 / 1C / PRS 101 / PAO1).